The primary structure comprises 149 residues: Large ribosomal subunit protein bL9 (149 aa).

It belongs to the bacterial ribosomal protein bL9 family.

In terms of biological role, binds to the 23S rRNA. The sequence is that of Large ribosomal subunit protein bL9 from Xanthomonas axonopodis pv. citri (strain 306).